Here is an 87-residue protein sequence, read N- to C-terminus: Small ribosomal subunit protein bS20 (87 aa).

The disordered stretch occupies residues 1-22 (MAHHKSALKRIKQNKRKQFRNK).

This sequence belongs to the bacterial ribosomal protein bS20 family.

Its function is as follows. Binds directly to 16S ribosomal RNA. This Geobacter metallireducens (strain ATCC 53774 / DSM 7210 / GS-15) protein is Small ribosomal subunit protein bS20.